The primary structure comprises 262 residues: Phycoerythrobilin:ferredoxin oxidoreductase (262 aa).

This sequence belongs to the HY2 family.

The catalysed reaction is (3Z)-phycoerythrobilin + oxidized 2[4Fe-4S]-[ferredoxin] = 15,16-dihydrobiliverdin + reduced 2[4Fe-4S]-[ferredoxin] + 2 H(+). Catalyzes the two-electron reduction of the C2 and C3(1) diene system of 15,16-dihydrobiliverdin. This chain is Phycoerythrobilin:ferredoxin oxidoreductase, found in Synechococcus sp. (strain RCC307).